Consider the following 325-residue polypeptide: Diaminopimelate epimerase (325 aa).

2 residues coordinate substrate: Asn11 and Asn69. Cys78 acts as the Proton donor in catalysis. Substrate contacts are provided by residues 79–80 (GN), Asn166, Asn203, and 221–222 (ER). Catalysis depends on Cys230, which acts as the Proton acceptor. 231–232 (GT) contacts substrate.

This sequence belongs to the diaminopimelate epimerase family. As to quaternary structure, homodimer.

The protein localises to the cytoplasm. The catalysed reaction is (2S,6S)-2,6-diaminopimelate = meso-2,6-diaminopimelate. The protein operates within amino-acid biosynthesis; L-lysine biosynthesis via DAP pathway; DL-2,6-diaminopimelate from LL-2,6-diaminopimelate: step 1/1. Functionally, catalyzes the stereoinversion of LL-2,6-diaminopimelate (L,L-DAP) to meso-diaminopimelate (meso-DAP), a precursor of L-lysine and an essential component of the bacterial peptidoglycan. The chain is Diaminopimelate epimerase from Ligilactobacillus salivarius (strain UCC118) (Lactobacillus salivarius).